A 337-amino-acid polypeptide reads, in one-letter code: Succinylglutamate desuccinylase (337 aa).

Zn(2+) is bound by residues H59, E62, and H152. E216 is a catalytic residue.

The protein belongs to the AspA/AstE family. Succinylglutamate desuccinylase subfamily. It depends on Zn(2+) as a cofactor.

The enzyme catalyses N-succinyl-L-glutamate + H2O = L-glutamate + succinate. It functions in the pathway amino-acid degradation; L-arginine degradation via AST pathway; L-glutamate and succinate from L-arginine: step 5/5. Its function is as follows. Transforms N(2)-succinylglutamate into succinate and glutamate. This chain is Succinylglutamate desuccinylase, found in Ectopseudomonas mendocina (strain ymp) (Pseudomonas mendocina).